The following is a 370-amino-acid chain: Phospho-N-acetylmuramoyl-pentapeptide-transferase (370 aa).

11 consecutive transmembrane segments (helical) span residues 21–41 (PTSILLIIGIIVVSIIVDLFI), 46–66 (LLVPLISSIIISAIITKWGII), 92–112 (PSMGGIFIVPISLILTNLFAL), 117–137 (FSKQLVALSFLSLAYMLIGLI), 151–171 (LSVKSKVILQTIVGIIFLVLI), 181–201 (ILIFGNNTINLGLLFWPIALF), 217–237 (DGLASGCGAIVFTGLAIELII), 243–263 (NYAIASFCITMAGAWLGFLIF), 270–290 (VFMGDTGSLAMGASLAGVALL), 298–318 (LIMGVIFLAESVSVIIQVGVF), and 349–369 (TIIVQNFWLITICFVCMAIML).

Belongs to the glycosyltransferase 4 family. MraY subfamily. It depends on Mg(2+) as a cofactor.

It localises to the cell inner membrane. The catalysed reaction is UDP-N-acetyl-alpha-D-muramoyl-L-alanyl-gamma-D-glutamyl-meso-2,6-diaminopimeloyl-D-alanyl-D-alanine + di-trans,octa-cis-undecaprenyl phosphate = di-trans,octa-cis-undecaprenyl diphospho-N-acetyl-alpha-D-muramoyl-L-alanyl-D-glutamyl-meso-2,6-diaminopimeloyl-D-alanyl-D-alanine + UMP. Its pathway is cell wall biogenesis; peptidoglycan biosynthesis. Catalyzes the initial step of the lipid cycle reactions in the biosynthesis of the cell wall peptidoglycan: transfers peptidoglycan precursor phospho-MurNAc-pentapeptide from UDP-MurNAc-pentapeptide onto the lipid carrier undecaprenyl phosphate, yielding undecaprenyl-pyrophosphoryl-MurNAc-pentapeptide, known as lipid I. This chain is Phospho-N-acetylmuramoyl-pentapeptide-transferase, found in Prochlorococcus marinus (strain SARG / CCMP1375 / SS120).